We begin with the raw amino-acid sequence, 126 residues long: MTRIRRGYIARRRRTKIRLFASSFRGAHSRLTRTITQQKIRALVSAHRDRDRQKINFRRLWITRINAAIRERGVCYSYSRLINDLYKRQLLLNRKILAQIAISNRNCLYMISNEIIKEVSWKESTG.

Belongs to the bacterial ribosomal protein bL20 family.

It localises to the plastid. The protein localises to the chloroplast. In terms of biological role, binds directly to 23S ribosomal RNA and is necessary for the in vitro assembly process of the 50S ribosomal subunit. It is not involved in the protein synthesizing functions of that subunit. In Guizotia abyssinica (Niger), this protein is Large ribosomal subunit protein bL20c.